The primary structure comprises 1258 residues: MPEKRLSAEPPEVTEEEFENYLATDNFLVDYFNEFLSLPTFPEAIRFNVDYGVFEVVNDAPQLLEKQLKKILQNQQPRNPIYDVVRKGKSDSKSTQKSVPCEDEAINVNYSIMCLKREQGINWIKRERLPAFLESDCYFEYRLAKLISQATWSSTGMNFIVGTNFTPWILRRPPAPPPPSTDEDNYMIMKKFYVSLGQASYTQTKDWFTLAKESENTVTMASLPCCIPHHQTASPVIATASEIFDDGVHPRTIKSLSKSSKAVSELDEEEEGSISMKDSPSQALLRVYLEKKGGKERNLTLHFSSVEEFLDAYIIFILREAIQHITGQSLSDTPEYINYYKVSHVIFDKVPPVPSNKAIVSPPVEMVEEISKDRLENVSLSSESESIGPESRADWCISHRTYDIGNRREFERFKKFLKGTLGERYWWLWMDIERLKVLKDPERHQRHLEKMKKCYLVSSGERYLSAEILSKFKLLHGSRWTADHLKNIQAEVLKPLLLYWAPRFCVTHSASAKNASTELKFWRLRQEKPRKDVDPFPQMATLLPLRPKSCIPQTPEVQGEEINLFQPSKFKKLSKINAGTQQLGRSEPLNAVSSKDGGLEKGSKRLPESTTVVRLTSFTDISECLKPQLERKYTYTEEHNVKTVSNVGALGGFDMENLLQSLYVENRAGFFFTKFCENSGNKLWKHSVYFWFDLQAYHQLFYQETLQPFKVCKQAQYLFATYIAPSASFDIGLHQEGKKDIYMKIQPPFEDLFDTAEEFILLSLLEPWTQMVMSDKMAYKKVELQEETRQLDSACFRKLHALHKETISKKAEDTTGYAMAKLSLSDVSKQTEYWLNVPEGYKHFTFTDLLNNKLEFEHFRQFLESHSSSLDLMCWIDIEQFRRIIFKDQKQREEKSIYIKNKYLNKKYFFGPRSPASLHQQNQIMLLSGGWGRILHEQLDASVLVEIQKHVLNRLENVWLPLFLSSEQFASRQKIKTQMKDIADELLLQRHDRKIGVWKPVESKWISSSCEIIAFRKALLNPVIARQFQRFVALKGDLLENGVLFWQEVQKFKDLCHSHCDESIIHKKITTIINCFINSYIPPALQIDIPVEQAQKILEHRKELGPYVFREAQMTIFGVLFKFWPQFCEFRKNLTDEKIMSVLERRQEHKQKRKASDTEEDKAGKSGVKQYASTTGSLTKPVLGSESLLVLQSYGRQPTWCYSKYIEALEQERILLKIQEEVERKMFTGTSSFTNLLKPSTGSALSLKKNVSLHSIQR.

The segment at 581 to 604 (QQLGRSEPLNAVSSKDGGLEKGSK) is disordered. RGS domains follow at residues 845–973 (TFTD…ASRQ) and 1014–1138 (AFRK…TDEK). Residues 1145-1172 (RRQEHKQKRKASDTEEDKAGKSGVKQYA) form a disordered region. A compositionally biased stretch (basic and acidic residues) spans 1154 to 1164 (KASDTEEDKAG).

Interacts with GNA11, GNA12 and GNA13. In terms of tissue distribution, expressed testis, including in Leydig cells and spermatogenic cells from the spermatogonia to spermatid stages (at protein level).

Its subcellular location is the cytoplasm. It is found in the nucleus. Its function is as follows. Inhibits signal transduction by increasing the GTPase activity of G protein alpha subunits thereby driving them into their inactive GDP-bound form. In Mus musculus (Mouse), this protein is Regulator of G-protein signaling 22 (Rgs22).